The following is a 341-amino-acid chain: Anthranilate phosphoribosyltransferase (341 aa).

Residues glycine 84, 87-88, threonine 92, 94-97, 112-120, and serine 124 each bind 5-phospho-alpha-D-ribose 1-diphosphate; these read GD, NIST, and KHGNRSVSS. Glycine 84 lines the anthranilate pocket. Mg(2+) is bound at residue serine 96. Asparagine 115 lines the anthranilate pocket. Arginine 170 contributes to the anthranilate binding site. Mg(2+) is bound by residues aspartate 229 and glutamate 230.

The protein belongs to the anthranilate phosphoribosyltransferase family. In terms of assembly, homodimer. Mg(2+) is required as a cofactor.

It carries out the reaction N-(5-phospho-beta-D-ribosyl)anthranilate + diphosphate = 5-phospho-alpha-D-ribose 1-diphosphate + anthranilate. It participates in amino-acid biosynthesis; L-tryptophan biosynthesis; L-tryptophan from chorismate: step 2/5. Catalyzes the transfer of the phosphoribosyl group of 5-phosphorylribose-1-pyrophosphate (PRPP) to anthranilate to yield N-(5'-phosphoribosyl)-anthranilate (PRA). This chain is Anthranilate phosphoribosyltransferase, found in Polynucleobacter asymbioticus (strain DSM 18221 / CIP 109841 / QLW-P1DMWA-1) (Polynucleobacter necessarius subsp. asymbioticus).